A 250-amino-acid chain; its full sequence is Ribosomal RNA small subunit methyltransferase J (250 aa).

Residues 101–102 (RD), 117–118 (ER), 153–154 (SS), and Asp-171 contribute to the S-adenosyl-L-methionine site.

The protein belongs to the methyltransferase superfamily. RsmJ family.

The protein localises to the cytoplasm. It catalyses the reaction guanosine(1516) in 16S rRNA + S-adenosyl-L-methionine = N(2)-methylguanosine(1516) in 16S rRNA + S-adenosyl-L-homocysteine + H(+). Its function is as follows. Specifically methylates the guanosine in position 1516 of 16S rRNA. The protein is Ribosomal RNA small subunit methyltransferase J of Klebsiella pneumoniae (strain 342).